The primary structure comprises 199 residues: 7-methyl-GTP pyrophosphatase (199 aa).

D72 acts as the Proton acceptor in catalysis.

The protein belongs to the Maf family. YceF subfamily. A divalent metal cation serves as cofactor.

The protein resides in the cytoplasm. It catalyses the reaction N(7)-methyl-GTP + H2O = N(7)-methyl-GMP + diphosphate + H(+). Its function is as follows. Nucleoside triphosphate pyrophosphatase that hydrolyzes 7-methyl-GTP (m(7)GTP). May have a dual role in cell division arrest and in preventing the incorporation of modified nucleotides into cellular nucleic acids. The sequence is that of 7-methyl-GTP pyrophosphatase from Alkalilimnicola ehrlichii (strain ATCC BAA-1101 / DSM 17681 / MLHE-1).